The primary structure comprises 165 residues: NADPH-dependent 7-cyano-7-deazaguanine reductase (165 aa).

Cysteine 56 functions as the Thioimide intermediate in the catalytic mechanism. Residue aspartate 63 is the Proton donor of the active site. Substrate is bound by residues 78–80 (VES) and 97–98 (HE).

The protein belongs to the GTP cyclohydrolase I family. QueF type 1 subfamily.

It localises to the cytoplasm. The catalysed reaction is 7-aminomethyl-7-carbaguanine + 2 NADP(+) = 7-cyano-7-deazaguanine + 2 NADPH + 3 H(+). It participates in tRNA modification; tRNA-queuosine biosynthesis. Its function is as follows. Catalyzes the NADPH-dependent reduction of 7-cyano-7-deazaguanine (preQ0) to 7-aminomethyl-7-deazaguanine (preQ1). This Oceanobacillus iheyensis (strain DSM 14371 / CIP 107618 / JCM 11309 / KCTC 3954 / HTE831) protein is NADPH-dependent 7-cyano-7-deazaguanine reductase.